The chain runs to 95 residues: Alpha-conotoxin-like Ms20.5 (95 aa).

A signal peptide spans 1–24 (MPKLAVVLLVLLILPLSYFDAAGG). Residues 25–45 (QAAEGDRRGNGLARYLQRGGR) constitute a propeptide that is removed on maturation. Glu50 is modified (4-carboxyglutamate). Pro56 carries the 4-hydroxyproline modification. Intrachain disulfides connect Cys64–Cys73, Cys69–Cys81, Cys74–Cys91, and Cys79–Cys93.

This sequence belongs to the conotoxin D superfamily. As to quaternary structure, hetero-, homo- or pseudo-homodimer (identical sequence, different post-translational modifications). Heterodimer of [carboxy'Glu-49', hydroxy'Pro-55']Ms20.3 and [carboxyGlu-50, hydroxyPro-56]Ms20.5 may exist. As to expression, expressed by the venom duct.

It is found in the secreted. Alpha-conotoxins act on postsynaptic membranes, they bind to the nicotinic acetylcholine receptors (nAChR) and thus inhibit them. Through its two C-terminal domains, this homodimeric protein would bind to two nAChR allosteric sites, located outside the nAChR C-loop of the principal binding face and at the adjacent binding interface in a clockwise direction. This toxin specifically blocks mammalian neuronal nAChR of the alpha-7/CHRNA7, alpha-3-beta-2/CHRNA3-CHRNB2 and alpha-4-beta-2/CHRNA4-CHRNB2 subtypes. The sequence is that of Alpha-conotoxin-like Ms20.5 from Conus mustelinus (Weasel cone).